A 745-amino-acid chain; its full sequence is Fatty acid oxidation complex subunit alpha (745 aa).

An enoyl-CoA hydratase region spans residues 47–209 (VNTLKAKFAE…KMGLVDDVVP (163 aa)). The interval 325 to 745 (RAIHRVGVLG…LDEAAITAHN (421 aa)) is 3-hydroxyacyl-CoA dehydrogenase.

The protein in the N-terminal section; belongs to the enoyl-CoA hydratase/isomerase family. This sequence in the central section; belongs to the 3-hydroxyacyl-CoA dehydrogenase family. In terms of assembly, heterotetramer of two alpha chains (FadJ) and two beta chains (FadI).

The protein localises to the cytoplasm. The catalysed reaction is a (3S)-3-hydroxyacyl-CoA = a (2E)-enoyl-CoA + H2O. It carries out the reaction a 4-saturated-(3S)-3-hydroxyacyl-CoA = a (3E)-enoyl-CoA + H2O. It catalyses the reaction a (3S)-3-hydroxyacyl-CoA + NAD(+) = a 3-oxoacyl-CoA + NADH + H(+). The enzyme catalyses (3S)-3-hydroxybutanoyl-CoA = (3R)-3-hydroxybutanoyl-CoA. It participates in lipid metabolism; fatty acid beta-oxidation. Functionally, catalyzes the formation of a hydroxyacyl-CoA by addition of water on enoyl-CoA. Also exhibits 3-hydroxyacyl-CoA epimerase and 3-hydroxyacyl-CoA dehydrogenase activities. The protein is Fatty acid oxidation complex subunit alpha of Yersinia enterocolitica serotype O:8 / biotype 1B (strain NCTC 13174 / 8081).